The primary structure comprises 278 residues: TATA box-binding protein-associated factor RNA polymerase I subunit D (278 aa).

2 disordered regions span residues 20-71 (ANRS…SSFE) and 88-116 (KKRYKKKKKRRYQPTGRPRGRPEGRRNPI). Polar residues predominate over residues 22–33 (RSDNSSDSSLFK). Ser23 bears the Phosphoserine mark. A compositionally biased stretch (basic residues) spans 88–99 (KKRYKKKKKRRY). Phosphoserine is present on residues Ser138 and Ser234.

As to quaternary structure, component of the transcription factor SL1/TIF-IB complex, composed of TBP and at least TAF1A, TAF1B, TAF1C and TAF1D. Interacts with UBTF.

The protein localises to the nucleus. Component of the transcription factor SL1/TIF-IB complex, which is involved in the assembly of the PIC (preinitiation complex) during RNA polymerase I-dependent transcription. The rate of PIC formation probably is primarily dependent on the rate of association of SL1/TIF-IB with the rDNA promoter. SL1/TIF-IB is involved in stabilization of nucleolar transcription factor 1/UBTF on rDNA. Formation of SL1/TIF-IB excludes the association of TBP with TFIID subunits. In Homo sapiens (Human), this protein is TATA box-binding protein-associated factor RNA polymerase I subunit D (TAF1D).